The chain runs to 621 residues: Replication factor A protein 1 (621 aa).

Serine 2 carries the N-acetylserine modification. Residue serine 178 is modified to Phosphoserine; by ATM or ATR. The segment at residues 197–284 (WTIKARVSYK…PYELNLDRDT (88 aa)) is a DNA-binding region (OB). A C4-type zinc finger spans residues 486–508 (CSNENCNKKVLEQPDGTWRCEKC).

The protein belongs to the replication factor A protein 1 family. As to quaternary structure, component of the heterotrimeric canonical replication protein A complex (RPA). Interacts with POB3. The N-terminus is blocked.

The protein localises to the nucleus. In terms of biological role, as part of the replication protein A (RPA/RP-A), a single-stranded DNA-binding heterotrimeric complex, may play an essential role in DNA replication, recombination and repair. Binds and stabilizes single-stranded DNA intermediates, preventing complementary DNA reannealing and recruiting different proteins involved in DNA metabolism. Binds to single-stranded sequences participating in DNA replication in addition to those mediating transcriptional repression (URS1) and activation (CAR1). Stimulates the activity of a cognate strand exchange protein (SEP1). It cooperates with T-AG and DNA topoisomerase I to unwind template DNA containing the simian virus 40 origin of DNA replication. In Saccharomyces cerevisiae (strain ATCC 204508 / S288c) (Baker's yeast), this protein is Replication factor A protein 1 (RFA1).